The following is a 78-amino-acid chain: Longicornsin (78 aa).

An N-terminal signal peptide occupies residues 1-22; it reads MAESTTTCFLLLVTGYVTAVMS. Positions 23 to 29 are excised as a propeptide; it reads EEAHLRS. Cystine bridges form between cysteine 35-cysteine 58, cysteine 43-cysteine 63, and cysteine 47-cysteine 65.

In terms of tissue distribution, salivary glands (at protein level).

It is found in the secreted. Its function is as follows. Has antibacterial activity against the Gram-positive bacteria S.aureus ATCC2592 (MIC=0.8 ug/ml), S.aureus 6A (MIC=0.8 ug/ml) and S.aureus 15A (MIC=1.6 ug/ml), and against the Gram-negative bacteria E.coli ATCC 25922 (MIC=3.2 ug/ml), E.coli 23A (MIC=6.4 ug/ml), E.coli 27A (MIC=6.4 ug/ml), P.aeruginosa 3A (MIC=3.2 ug/ml), P.aeruginosa 7A (MIC=0.8 ug/ml) and H.pylori NCTC11637 (MIC=6.4 ug/ml). Has antifungal activity against C.albidus ATCC2002 (MIC=25.6 ug/ml). Very low hemolytic activity against rabbit erythrocytes. This Haemaphysalis longicornis (Bush tick) protein is Longicornsin.